We begin with the raw amino-acid sequence, 602 residues long: Glutamine--fructose-6-phosphate aminotransferase [isomerizing] (602 aa).

C2 functions as the Nucleophile; for GATase activity in the catalytic mechanism. One can recognise a Glutamine amidotransferase type-2 domain in the interval 2 to 217 (CGIVGVVGNT…DQELVIVKAD (216 aa)). Positions 67–87 (IGHTRWATHGKPTEDNAHPHR) are disordered. Over residues 77–87 (KPTEDNAHPHR) the composition is skewed to basic and acidic residues. SIS domains follow at residues 283 to 422 (IIKA…ANGN) and 455 to 592 (VREL…VDKP). K597 acts as the For Fru-6P isomerization activity in catalysis.

As to quaternary structure, homodimer.

The protein localises to the cytoplasm. The catalysed reaction is D-fructose 6-phosphate + L-glutamine = D-glucosamine 6-phosphate + L-glutamate. Functionally, catalyzes the first step in hexosamine metabolism, converting fructose-6P into glucosamine-6P using glutamine as a nitrogen source. In Streptococcus pneumoniae serotype 4 (strain ATCC BAA-334 / TIGR4), this protein is Glutamine--fructose-6-phosphate aminotransferase [isomerizing].